The following is a 115-amino-acid chain: Non-specific lipid-transfer protein 4.2 (115 aa).

An N-terminal signal peptide occupies residues 1 to 25 (MARAAATQLVLVAMVAAMLIVATDA). Cystine bridges form between Cys-29/Cys-77, Cys-39/Cys-54, Cys-55/Cys-97, and Cys-75/Cys-111.

It belongs to the plant LTP family.

Plant non-specific lipid-transfer proteins transfer phospholipids as well as galactolipids across membranes. May play a role in wax or cutin deposition in the cell walls of expanding epidermal cells and certain secretory tissues. The protein is Non-specific lipid-transfer protein 4.2 (LTP4.2) of Hordeum vulgare (Barley).